The sequence spans 191 residues: Negative modulator of initiation of replication (191 aa).

Residues 96–97 (AV) form an interaction with DNA region.

The protein belongs to the SeqA family. Homodimer. Polymerizes to form helical filaments.

It localises to the cytoplasm. Functionally, negative regulator of replication initiation, which contributes to regulation of DNA replication and ensures that replication initiation occurs exactly once per chromosome per cell cycle. Binds to pairs of hemimethylated GATC sequences in the oriC region, thus preventing assembly of replication proteins and re-initiation at newly replicated origins. Repression is relieved when the region becomes fully methylated. The polypeptide is Negative modulator of initiation of replication (Shewanella amazonensis (strain ATCC BAA-1098 / SB2B)).